The primary structure comprises 372 residues: NAD(P)H-quinone oxidoreductase subunit 1 (372 aa).

8 consecutive transmembrane segments (helical) span residues 27-47, 97-117, 128-148, 166-186, 204-224, 266-286, 308-328, and 347-367; these read LIWL…GVLV, LLFT…WLIV, VGVG…GLLM, AAQS…VVMM, ILSW…ICAL, VLSA…PVPV, ATGI…AILL, and FLLP…LAFP.

Belongs to the complex I subunit 1 family. As to quaternary structure, NDH-1 is composed of at least 11 different subunits.

The protein localises to the cellular thylakoid membrane. It catalyses the reaction a plastoquinone + NADH + (n+1) H(+)(in) = a plastoquinol + NAD(+) + n H(+)(out). It carries out the reaction a plastoquinone + NADPH + (n+1) H(+)(in) = a plastoquinol + NADP(+) + n H(+)(out). Functionally, NDH-1 shuttles electrons from an unknown electron donor, via FMN and iron-sulfur (Fe-S) centers, to quinones in the respiratory and/or the photosynthetic chain. The immediate electron acceptor for the enzyme in this species is believed to be plastoquinone. Couples the redox reaction to proton translocation, and thus conserves the redox energy in a proton gradient. The sequence is that of NAD(P)H-quinone oxidoreductase subunit 1 from Synechococcus sp. (strain WH7803).